The primary structure comprises 240 residues: UDP-2,3-diacylglucosamine hydrolase (240 aa).

The Mn(2+) site is built by D8, H10, D41, N79, and H114. 79-80 (NR) is a substrate binding site. 5 residues coordinate substrate: D122, S160, N164, K167, and H195. 2 residues coordinate Mn(2+): H195 and H197.

This sequence belongs to the LpxH family. Requires Mn(2+) as cofactor.

The protein resides in the cell inner membrane. It catalyses the reaction UDP-2-N,3-O-bis[(3R)-3-hydroxytetradecanoyl]-alpha-D-glucosamine + H2O = 2-N,3-O-bis[(3R)-3-hydroxytetradecanoyl]-alpha-D-glucosaminyl 1-phosphate + UMP + 2 H(+). Its pathway is glycolipid biosynthesis; lipid IV(A) biosynthesis; lipid IV(A) from (3R)-3-hydroxytetradecanoyl-[acyl-carrier-protein] and UDP-N-acetyl-alpha-D-glucosamine: step 4/6. In terms of biological role, hydrolyzes the pyrophosphate bond of UDP-2,3-diacylglucosamine to yield 2,3-diacylglucosamine 1-phosphate (lipid X) and UMP by catalyzing the attack of water at the alpha-P atom. Involved in the biosynthesis of lipid A, a phosphorylated glycolipid that anchors the lipopolysaccharide to the outer membrane of the cell. The protein is UDP-2,3-diacylglucosamine hydrolase of Escherichia coli O6:K15:H31 (strain 536 / UPEC).